Here is a 569-residue protein sequence, read N- to C-terminus: Retrotransposon Gag-like protein 5 (569 aa).

Disordered regions lie at residues 115–151 (DGPADPPLLPIPPPPALPPPASKEPPPQPPLAPLERP) and 323–506 (RNII…PSRR). Residues 117 to 146 (PADPPLLPIPPPPALPPPASKEPPPQPPLA) are compositionally biased toward pro residues. Residues 334–350 (NEEESEDEEYYSEDEDQ) are compositionally biased toward acidic residues. A compositionally biased stretch (basic residues) spans 353–367 (RRHRLHSKDQRKRMR). Composition is skewed to basic and acidic residues over residues 372–392 (EMKEKEEEEMKKEEEMKKKEE) and 401–415 (MKQKEEEEEIRNKNE). Composition is skewed to acidic residues over residues 416 to 429 (EEGESKDEEDEDED) and 443 to 469 (GTEETYGEVEEEPLDEAQDDDLDELME). Residues 476-485 (HASSQTSGPT) are compositionally biased toward polar residues.

The polypeptide is Retrotransposon Gag-like protein 5 (Homo sapiens (Human)).